Reading from the N-terminus, the 57-residue chain is MTTCKDCAFFFSIPEDADDFEKSKGDCVTQKDDEKGRYWLSKPVFENDQCCGAFHKR.

Heterohexamer composed of 2 alpha subunits, 2 beta subunits and 2 gamma subunits.

The enzyme catalyses toluene + fumarate = 2-benzylsuccinate. It functions in the pathway xenobiotic degradation; toluene degradation. Activated by the benzylsuccinate synthase activating enzyme BssD. Rapidly inactivated by oxygen. In terms of biological role, catalyzes the addition of fumarate to the methyl group of toluene, leading to the formation of benzylsuccinate. The polypeptide is Benzylsuccinate synthase gamma subunit (bssC) (Thauera aromatica).